A 117-amino-acid polypeptide reads, in one-letter code: Putative iron-sulfur cluster insertion protein ErpA (117 aa).

Iron-sulfur cluster contacts are provided by cysteine 45, cysteine 109, and cysteine 111.

This sequence belongs to the HesB/IscA family. Homodimer. It depends on iron-sulfur cluster as a cofactor.

Functionally, required for insertion of 4Fe-4S clusters. This chain is Putative iron-sulfur cluster insertion protein ErpA, found in Chromobacterium violaceum (strain ATCC 12472 / DSM 30191 / JCM 1249 / CCUG 213 / NBRC 12614 / NCIMB 9131 / NCTC 9757 / MK).